The primary structure comprises 474 residues: Dol-P-Glc:Glc(2)Man(9)GlcNAc(2)-PP-Dol alpha-1,2-glucosyltransferase (474 aa).

Topologically, residues 1–6 are cytoplasmic; the sequence is MAQLEG. A helical transmembrane segment spans residues 7-27; that stretch reads YYFSAALSCTFLVSCLLFSAF. The Extracellular portion of the chain corresponds to 28 to 64; sequence SRALREPYMDEIFHLPQAQRYCEGRFSLSQWDPMITT. The helical transmembrane segment at 65 to 85 threads the bilayer; the sequence is LPGLYLVSVGVVKPASWLLGW. Topologically, residues 86 to 97 are cytoplasmic; sequence SEHVICSIGVLR. A helical transmembrane segment spans residues 98 to 118; that stretch reads FVNLLFSVGNFYLLYLLFRKV. At 119-126 the chain is on the extracellular side; the sequence is QPRNKASS. A helical transmembrane segment spans residues 127 to 147; that stretch reads SIQRILSTLTLAVFPTLYFFN. At 148-150 the chain is on the cytoplasmic side; that stretch reads FLY. The helical transmembrane segment at 151 to 171 threads the bilayer; sequence YTEAGSVFFTLFAYLMCLYGN. Residues 172-175 lie on the Extracellular side of the membrane; it reads HRTS. Residues 176 to 196 traverse the membrane as a helical segment; sequence ALLGFCGFMFRQTNIIWAAFC. The Cytoplasmic segment spans residues 197–256; the sequence is AGHLIAQKCSEAWKIELQKKKEERLAPTKGPLSELRRVLQFLLVYAMSLKNLRMLFLLTW. A helical transmembrane segment spans residues 257–277; it reads PYVLLLLAFFAFVVVNGGIVV. Over 278–283 the chain is Extracellular; that stretch reads GDRSSH. Residues 284–304 traverse the membrane as a helical segment; sequence EACLHFPQLFYFFSFTAFFSF. Topologically, residues 305–317 are cytoplasmic; it reads PHLLSLTKVKTFL. The chain crosses the membrane as a helical span at residues 318–338; it reads SLVWKRRVQFSVVTLVSILLV. Over 339–365 the chain is Extracellular; that stretch reads WKFTYVHKYLLADNRHYTFYVWKRVFQ. Residues 366–386 form a helical membrane-spanning segment; sequence RHEVVKYLLVPAYIFAGWAIA. At 387-392 the chain is on the cytoplasmic side; that stretch reads DSLKAK. A helical transmembrane segment spans residues 393-413; that stretch reads SIFWNLMFFVCLVASTVPQKL. The Extracellular portion of the chain corresponds to 414–436; the sequence is LEFRYFILPYIIYRLNIPLPPIS. Residues 437–457 form a helical membrane-spanning segment; it reads RLVCELGCYTVVNFVTFYIFL. The Cytoplasmic portion of the chain corresponds to 458–473; it reads NKTFQWPNSQDIQRFM.

The protein belongs to the ALG10 glucosyltransferase family. As to quaternary structure, interacts with KCNH1; may regulate KCNH1, possibly by regulating its N-glycosylation. Interacts with KCNH2; may reduce KCNH2 sensitivity to classic proarrhythmic drug blockade, possibly by regulating its N-glycosylation.

The protein resides in the endoplasmic reticulum membrane. The enzyme catalyses an alpha-D-Glc-(1-&gt;3)-alpha-D-Glc-(1-&gt;3)-alpha-D-Man-(1-&gt;2)-alpha-D-Man-(1-&gt;2)-alpha-D-Man-(1-&gt;3)-[alpha-D-Man-(1-&gt;2)-alpha-D-Man-(1-&gt;3)-[alpha-D-Man-(1-&gt;2)-alpha-D-Man-(1-&gt;6)]-alpha-D-Man-(1-&gt;6)]-beta-D-Man-(1-&gt;4)-beta-D-GlcNAc-(1-&gt;4)-alpha-D-GlcNAc-diphospho-di-trans,poly-cis-dolichol + a di-trans,poly-cis-dolichyl beta-D-glucosyl phosphate = a alpha-D-Glc-(1-&gt;2)-alpha-D-Glc-(1-&gt;3)-alpha-D-Glc-(1-&gt;3)-alpha-D-Man-(1-&gt;2)-alpha-D-Man-(1-&gt;2)-alpha-D-Man-(1-&gt;3)-[alpha-D-Man-(1-&gt;2)-alpha-D-Man-(1-&gt;3)-[alpha-D-Man-(1-&gt;2)-alpha-D-Man-(1-&gt;6)]-alpha-D-Man-(1-&gt;6)]-beta-D-Man-(1-&gt;4)-beta-D-GlcNAc-(1-&gt;4)-alpha-D-GlcNAc-diphospho-di-trans,poly-cis-dolichol + a di-trans,poly-cis-dolichyl phosphate + H(+). Its pathway is protein modification; protein glycosylation. In terms of biological role, dol-P-Glc:Glc(2)Man(9)GlcNAc(2)-PP-Dol alpha-1,2-glucosyltransferase that operates in the biosynthetic pathway of dolichol-linked oligosaccharides, the glycan precursors employed in protein asparagine (N)-glycosylation. The assembly of dolichol-linked oligosaccharides begins on the cytosolic side of the endoplasmic reticulum membrane and finishes in its lumen. The sequential addition of sugars to dolichol pyrophosphate produces dolichol-linked oligosaccharides containing fourteen sugars, including two GlcNAcs, nine mannoses and three glucoses. Once assembled, the oligosaccharide is transferred from the lipid to nascent proteins by oligosaccharyltransferases. In the lumen of the endoplasmic reticulum, adds the third and last glucose residue from dolichyl phosphate glucose (Dol-P-Glc) onto the lipid-linked oligosaccharide intermediate Glc(2)Man(9)GlcNAc(2)-PP-Dol to produce Glc(3)Man(9)GlcNAc(2)-PP-Dol. The chain is Dol-P-Glc:Glc(2)Man(9)GlcNAc(2)-PP-Dol alpha-1,2-glucosyltransferase from Mus musculus (Mouse).